We begin with the raw amino-acid sequence, 780 residues long: cGMP-dependent protein kinase egl-4 (780 aa).

Disordered regions lie at residues 1 to 55 and 119 to 143; these read MSSG…QVQV and EQKAQSAASPGGQPPSPSPRTDQLG. Positions 9 to 35 are enriched in gly residues; sequence SGGGGGGGGASGGAGGGAPGGGGGGIR. Positions 46 to 55 are enriched in polar residues; sequence DQPNGNQVQV. Residues 61–127 adopt a coiled-coil conformation; it reads EAHELQKLIP…LEQKAQSAAS (67 aa). 3',5'-cyclic GMP-binding positions include 265 to 268, 275 to 276, R380, 389 to 392, 399 to 400, and Y434; these read GELA, RT, and GERA. The region spanning 469 to 729 is the Protein kinase domain; it reads VKRLATLGVG…VNDIRKHRWF (261 aa). Residues 475-483 and K499 each bind ATP; that span reads LGVGGFGRV. The Nuclear localization signal motif lies at 492–504; that stretch reads KAKTFALKALKKK. The Proton acceptor role is filled by D593. The 51-residue stretch at 730–780 folds into the AGC-kinase C-terminal domain; it reads MGFDWEGLRSRTLKPPILPKVSNPADVTNFDNYPPDNDVPPDEFSGWDEGF. Positions 757 to 780 are disordered; that stretch reads TNFDNYPPDNDVPPDEFSGWDEGF.

The protein belongs to the protein kinase superfamily. AGC Ser/Thr protein kinase family. cGMP subfamily. When phosphorylated, interacts with saeg-2. May interact with saeg-1. The cofactor is Mg(2+). Post-translationally, autophosphorylated. In terms of tissue distribution, expressed in AWC sensory neurons (at protein level). Mainly expressed in head neurons, hypodermis, intestine and body wall muscles. L2 and L3 larvae show extensive expression, lower levels are observed in L4 larvae, later embryos and adults. Isoform c is expressed in a subset of neurons in the head, nerve ring, and ventral nerve cord including some motor neurons, also in several neurons in the tail, the pharyngeal marginal cells, body muscle, intestine, vulval muscles, and spermatheca.

It localises to the cytoplasm. The protein resides in the nucleus. It catalyses the reaction L-seryl-[protein] + ATP = O-phospho-L-seryl-[protein] + ADP + H(+). The catalysed reaction is L-threonyl-[protein] + ATP = O-phospho-L-threonyl-[protein] + ADP + H(+). Its activity is regulated as follows. Binding of cGMP results in enzyme activation. Promotes chemoreceptor gene expression in response to increased cGMP levels by antagonizing the gene repression functions of the class II HDAC hda-4 and the mef-2 transcription factor. Regulates gene expression via recruitment of a histone deacetylase complex containing hda-2, saeg-1 and saeg-2. Represses body size and lifespan through the dbl-1 and insulin pathways, respectively. May also signal through daf-3 and/or daf-5. Role in egg-laying, dauer formation and motility. Regulates behavioral responses to various chemosensory stimuli in sensory neurons. Required for the initiation of long term adaptation to prolonged odor exposure which results in a decrease in odor seeking behavior. May regulate this process by phosphorylating tax-2, a subunit of cyclic nucleotide-gated channel tax-2/tax-4. In ASH sensory neurons, negatively regulates avoidance behavior to some bitter tastants, such as quinine, probably by phosphorylating rgs-2 and rgs-3 which are 2 regulator of G-protein signaling proteins. In AWB sensory neurons, involved in avoidance behavior to some repellent odors. In ASE left (ASEL) sensory neuron, involved in the sensing of environmental alkalinity downstream of receptor-type guanylate cyclase gcy-14. In sensory neurons, involved in the signaling pathway downstream of insulin, TGF-beta and receptor-type guanylate cyclase responsible for inducing quiescence after food intake. Might play a role in aversive olfactory learning in AWC neurons when an odor is associated with food deprivation, depending on the ins-1/age-1 signal from the AIA to the AWC neurons. Probably by regulating neuronal transmission downstream of lin-3 and receptor lin-23 and phospholipase plc-3 in ALA neurons, involved in the decrease in locomotion during the quiescent state that precedes each larval molt. This chain is cGMP-dependent protein kinase egl-4, found in Caenorhabditis elegans.